Here is a 336-residue protein sequence, read N- to C-terminus: Nicotinate-nucleotide--dimethylbenzimidazole phosphoribosyltransferase (336 aa).

The tract at residues 20-41 (GPDAAARAGAEERNGQLTKPPG) is disordered. The active-site Proton acceptor is Glu-304.

It belongs to the CobT family.

It carries out the reaction 5,6-dimethylbenzimidazole + nicotinate beta-D-ribonucleotide = alpha-ribazole 5'-phosphate + nicotinate + H(+). It functions in the pathway nucleoside biosynthesis; alpha-ribazole biosynthesis; alpha-ribazole from 5,6-dimethylbenzimidazole: step 1/2. In terms of biological role, catalyzes the synthesis of alpha-ribazole-5'-phosphate from nicotinate mononucleotide (NAMN) and 5,6-dimethylbenzimidazole (DMB). The chain is Nicotinate-nucleotide--dimethylbenzimidazole phosphoribosyltransferase from Ruegeria pomeroyi (strain ATCC 700808 / DSM 15171 / DSS-3) (Silicibacter pomeroyi).